Reading from the N-terminus, the 190-residue chain is NADH-quinone oxidoreductase subunit B (190 aa).

Positions 39, 40, 104, and 135 each coordinate [4Fe-4S] cluster.

It belongs to the complex I 20 kDa subunit family. NDH-1 is composed of 14 different subunits. Subunits NuoB, C, D, E, F, and G constitute the peripheral sector of the complex. [4Fe-4S] cluster is required as a cofactor.

It localises to the cell inner membrane. The enzyme catalyses a quinone + NADH + 5 H(+)(in) = a quinol + NAD(+) + 4 H(+)(out). In terms of biological role, NDH-1 shuttles electrons from NADH, via FMN and iron-sulfur (Fe-S) centers, to quinones in the respiratory chain. The immediate electron acceptor for the enzyme in this species is believed to be a menaquinone. Couples the redox reaction to proton translocation (for every two electrons transferred, four hydrogen ions are translocated across the cytoplasmic membrane), and thus conserves the redox energy in a proton gradient. The polypeptide is NADH-quinone oxidoreductase subunit B (Chlorobium chlorochromatii (strain CaD3)).